The chain runs to 194 residues: MEDAAAPNSGSEFNPGARRGKSIDECQDMIRRSFRNPIVKFLMEQMEKSGCRVGDNFVKAVVCTGPVAGGYTKGRGITVCSNYLTIQDEVNQVVIHELIHAYDECRAKNLDWTNCAHHACSEIRAGHLSGDCHFKRELLRGFIKLRGHEQECIKRRVLKSLRGNPYCSEVAAKDAMEAVWDTCYNDTKPFDRAP.

The disordered stretch occupies residues 1 to 20; sequence MEDAAAPNSGSEFNPGARRG. His96 serves as a coordination point for Zn(2+). The active site involves Glu97. Zn(2+) is bound at residue His100.

Belongs to the peptidase M76 family.

Its subcellular location is the mitochondrion inner membrane. In terms of biological role, has a dual role in the assembly of mitochondrial ATPase. Acts as a protease that removes the N-terminal 10 residues of mitochondrial ATPase CF(0) subunit 6 (ATP6) at the intermembrane space side. Also involved in the correct assembly of the membrane-embedded ATPase CF(0) particle, probably mediating association of ATP6 with the subunit 9 ring. In Arabidopsis thaliana (Mouse-ear cress), this protein is Mitochondrial inner membrane protease ATP23.